The following is a 160-amino-acid chain: Eukaryotic translation initiation factor 5A (160 aa).

A compositionally biased stretch (basic and acidic residues) spans Met-1–Ala-12. The interval Met-1 to Pro-21 is disordered. Lys-52 is modified (hypusine).

The protein belongs to the eIF-5A family. Lys-53 undergoes hypusination, a unique post-translational modification that consists in the addition of a butylamino group from spermidine to lysine side chain, leading to the formation of the unusual amino acid hypusine. eIF-5As are the only known proteins to undergo this modification, which is essential for their function.

Its function is as follows. Translation factor that promotes translation elongation and termination, particularly upon ribosome stalling at specific amino acid sequence contexts. Binds between the exit (E) and peptidyl (P) site of the ribosome and promotes rescue of stalled ribosome: specifically required for efficient translation of polyproline-containing peptides as well as other motifs that stall the ribosome. Acts as a ribosome quality control (RQC) cofactor by joining the RQC complex to facilitate peptidyl transfer during CAT tailing step. This is Eukaryotic translation initiation factor 5A from Manihot esculenta (Cassava).